The sequence spans 245 residues: Adapter protein MecA (245 aa).

The protein belongs to the MecA family. Homodimer.

Its function is as follows. Enables the recognition and targeting of unfolded and aggregated proteins to the ClpC protease or to other proteins involved in proteolysis. The protein is Adapter protein MecA of Streptococcus pneumoniae (strain Hungary19A-6).